We begin with the raw amino-acid sequence, 406 residues long: Probable tRNA sulfurtransferase (406 aa).

The 107-residue stretch at 60–166 (DQVMNRLKLV…LNGIFLSSET (107 aa)) folds into the THUMP domain. ATP-binding positions include 184–185 (MM), 209–210 (HF), Arg-266, Gly-288, and Gln-297.

Belongs to the ThiI family.

The protein localises to the cytoplasm. It catalyses the reaction [ThiI sulfur-carrier protein]-S-sulfanyl-L-cysteine + a uridine in tRNA + 2 reduced [2Fe-2S]-[ferredoxin] + ATP + H(+) = [ThiI sulfur-carrier protein]-L-cysteine + a 4-thiouridine in tRNA + 2 oxidized [2Fe-2S]-[ferredoxin] + AMP + diphosphate. The enzyme catalyses [ThiS sulfur-carrier protein]-C-terminal Gly-Gly-AMP + S-sulfanyl-L-cysteinyl-[cysteine desulfurase] + AH2 = [ThiS sulfur-carrier protein]-C-terminal-Gly-aminoethanethioate + L-cysteinyl-[cysteine desulfurase] + A + AMP + 2 H(+). It participates in cofactor biosynthesis; thiamine diphosphate biosynthesis. In terms of biological role, catalyzes the ATP-dependent transfer of a sulfur to tRNA to produce 4-thiouridine in position 8 of tRNAs, which functions as a near-UV photosensor. Also catalyzes the transfer of sulfur to the sulfur carrier protein ThiS, forming ThiS-thiocarboxylate. This is a step in the synthesis of thiazole, in the thiamine biosynthesis pathway. The sulfur is donated as persulfide by IscS. The sequence is that of Probable tRNA sulfurtransferase from Limosilactobacillus reuteri subsp. reuteri (strain JCM 1112) (Lactobacillus reuteri).